A 209-amino-acid polypeptide reads, in one-letter code: Kinetochore protein Spc25 (209 aa).

Positions 74–107 (TRAVREKLAEERQKNAEMQAQLEKANDERIEQMD) form a coiled coil.

The protein belongs to the SPC25 family. In terms of assembly, component of the Ndc80 complex, which is composed of Ndc80, Nuf2 and Spc25.

The protein resides in the nucleus. Its subcellular location is the chromosome. It is found in the centromere. It localises to the kinetochore. In terms of biological role, acts as a component of the essential kinetochore-associated Ndc80 complex, which is required for chromosome segregation and spindle checkpoint activity during meiosis and mitosis. Required for kinetochore integrity and the organization of stable microtubule binding sites in the outer plate of the kinetochore. Participates in SAC signaling that responds specifically to disruptions in spindle microtubule dynamics. The NDC80 complex synergistically enhances the affinity of the SKA1 complex for microtubules and may allow the NDC80 complex to track depolymerizing microtubules. This chain is Kinetochore protein Spc25, found in Drosophila grimshawi (Hawaiian fruit fly).